The following is a 907-amino-acid chain: MFSKILTKVIGSRNDRTLRKLRKIVDQINKLEPQFESLQDEELKAKTIEFRARLEQGEDLDSLLPEAFATVREASKRLYGMRHFDVQMIGGMVLNDSQIAEMRTGEGKTLTATLPCYLNALTGKGVHVVTVNDYLAKRDAETNRELFEFLGMTVGVNVPNMPPQEKKQAYLCDILYGTNNEFGFDYLRDNMAFRAEDRVQRERYFAVVDEVDSILIDEARTPLIISGPAEDSSELYIRINTLIPQLVKQDEEDSEEYRGEGHYTLDEKGKQTHLTENGQEFVEQLLKDAGLMEEDDTLYSPANISLLHHINAALRAHVLFEKDVDYIVKDDEVIIVDEHTGRTMPGRRWSEGLHQAVEAKEGVKIQNENQTLASITFQNFFRLYDKLSGMTGTADTEAFEFQSIYGLDTVVIPTNRPMARNDMGDLVYMTEAEKFAAIIEDIKGCSERGQPVLVGTVSIEKSELLSNALKKAKIKHNVLNAKFHEQEADIVANAGTASAVTIATNMAGRGTDIVLGGSWQADVAKLSDPTEEQIQAVKAKWKEAHDAVLASGGLHIIGTERHESRRIDNQLRGRAGRQGDAGSSRFYLSMEDALMRIFASDRVSGMMKKLGMEEGEAIEHPWVTKAIENAQRKVEGRNFDIRKQLLEYDDVANDQRKVVYELRDELMNVDDISEMIGYNRQEVLEGLFGQYIPPQSLEEMWDVEGLTIRLRADFDLDLPLQEWLDNDDKLHEDNLREKIIEAAVQVYKEKEESVGESVLRNFEKAVMLQTLDGLWKEHLAAMDHLRQGIHLRGYAQKNPKQEYKRESFELFEGLLDTLKFDVVSILSKVRVQQQEDVERMEEQRRLQAEEAARRQQLQHQNAENQLDDGEGAEEAHSPMVREERKVGRNEPCPCGSGKKYKQCHGKI.

ATP is bound by residues Gln87, 105–109, and Asp512; that span reads GEGKT. The segment at 834-907 is disordered; that stretch reads QEDVERMEEQ…KKYKQCHGKI (74 aa). Composition is skewed to basic and acidic residues over residues 836 to 853 and 873 to 888; these read DVER…EAAR and EEAH…KVGR. Residues Cys892, Cys894, Cys903, and His904 each coordinate Zn(2+). The segment covering 898–907 has biased composition (basic residues); sequence KKYKQCHGKI.

This sequence belongs to the SecA family. In terms of assembly, monomer and homodimer. Part of the essential Sec protein translocation apparatus which comprises SecA, SecYEG and auxiliary proteins SecDF-YajC and YidC. Zn(2+) is required as a cofactor.

It is found in the cell inner membrane. It localises to the cytoplasm. It catalyses the reaction ATP + H2O + cellular proteinSide 1 = ADP + phosphate + cellular proteinSide 2.. Part of the Sec protein translocase complex. Interacts with the SecYEG preprotein conducting channel. Has a central role in coupling the hydrolysis of ATP to the transfer of proteins into and across the cell membrane, serving both as a receptor for the preprotein-SecB complex and as an ATP-driven molecular motor driving the stepwise translocation of polypeptide chains across the membrane. This is Protein translocase subunit SecA from Aliivibrio fischeri (strain ATCC 700601 / ES114) (Vibrio fischeri).